Consider the following 373-residue polypeptide: Type II secretion system protein L (373 aa).

The Cytoplasmic portion of the chain corresponds to 1 to 214; that stretch reads MTAWRDTLGR…RRSDPMQRWN (214 aa). A helical membrane pass occupies residues 215–233; sequence LLLAVAALVLLAVAGWLLL. Over 234 to 373 the chain is Periplasmic; it reads DNRRQAADDL…AKEAADAAQR (140 aa).

This sequence belongs to the GSP L family. As to quaternary structure, type II secretion system is composed of four main components: the outer membrane complex, the inner membrane complex, the cytoplasmic secretion ATPase and the periplasm-spanning pseudopilus. Forms homodimers. Interacts with XpsM/GspM. Interacts with XpsE/GspE and XpsF/GspF.

The protein localises to the cell inner membrane. In terms of biological role, inner membrane component of the type II secretion system required for the energy-dependent secretion of extracellular factors such as proteases and toxins from the periplasm. Plays a role in the complex assembly and recruits XpsM resulting in a stable complex in the inner membrane. Provides thus a link between the energy-providing XpsE protein in the cytoplasm and the rest of the T2SS machinery. This chain is Type II secretion system protein L (pefL), found in Xanthomonas campestris pv. campestris (strain ATCC 33913 / DSM 3586 / NCPPB 528 / LMG 568 / P 25).